We begin with the raw amino-acid sequence, 240 residues long: Transcriptional regulatory protein ResD (240 aa).

In terms of domain architecture, Response regulatory spans 8–121; it reads KILVVDDEAR…EVVLRVKALL (114 aa). Residue Asp-57 is modified to 4-aspartylphosphate. Positions 137–237 form a DNA-binding region, ompR/PhoB-type; it reads KNVLVFSHLS…VWGVGYKFEV (101 aa).

In terms of assembly, interacts with the RNA polymerase core. In terms of processing, phosphorylated by ResE.

It localises to the cytoplasm. In terms of biological role, member of the two-component regulatory system ResD/ResE. Required for the expression of resA, ctaA, qcrABC and fnr; activation role in global regulation of aerobic and anaerobic respiration. The sequence is that of Transcriptional regulatory protein ResD (resD) from Bacillus subtilis (strain 168).